We begin with the raw amino-acid sequence, 146 residues long: Hemoglobin subunit beta (146 aa).

Residue Val-1 is modified to N-acetylvaline. In terms of domain architecture, Globin spans His-2–His-146. Thr-12 carries the phosphothreonine modification. Ser-44 bears the Phosphoserine mark. Position 59 is an N6-acetyllysine (Lys-59). Position 63 (His-63) interacts with heme b. Lys-82 is modified (N6-acetyllysine). His-92 is a heme b binding site. Cys-93 carries the post-translational modification S-nitrosocysteine. Lys-144 bears the N6-acetyllysine mark.

The protein belongs to the globin family. As to quaternary structure, heterotetramer of two alpha chains and two beta chains. In terms of tissue distribution, red blood cells.

Functionally, involved in oxygen transport from the lung to the various peripheral tissues. In Mustela putorius furo (European domestic ferret), this protein is Hemoglobin subunit beta (HBB).